Reading from the N-terminus, the 68-residue chain is Large ribosomal subunit protein bL35 (68 aa).

Belongs to the bacterial ribosomal protein bL35 family.

This chain is Large ribosomal subunit protein bL35, found in Pelagibacter ubique (strain HTCC1062).